Reading from the N-terminus, the 463-residue chain is Argininosuccinate lyase (463 aa).

Belongs to the lyase 1 family. Argininosuccinate lyase subfamily.

It is found in the cytoplasm. It carries out the reaction 2-(N(omega)-L-arginino)succinate = fumarate + L-arginine. It functions in the pathway amino-acid biosynthesis; L-arginine biosynthesis; L-arginine from L-ornithine and carbamoyl phosphate: step 3/3. The protein is Argininosuccinate lyase of Bacillus cereus (strain AH187).